Here is a 120-residue protein sequence, read N- to C-terminus: Insulin-like peptide 3 (120 aa).

An N-terminal signal peptide occupies residues 1 to 29 (MGIEMRCQDRRILLPSLLLLILMIGGVQA). Disulfide bonds link cysteine 34–cysteine 101, cysteine 46–cysteine 114, and cysteine 100–cysteine 105. A propeptide spans 51-89 (NAMTKRTLDPVNFNQIDGFEDRSLLERLLSDSSVQMLKT) (connecting peptide).

Belongs to the insulin family. In terms of assembly, heterodimer of a B chain and an A chain linked by two disulfide bonds. As to expression, expressed at a high level in seven cells of each larval brain hemisphere that may correspond to neurosecretory cells.

It is found in the secreted. Possible ligand of InR/insulin-like receptor. This is Insulin-like peptide 3 from Drosophila melanogaster (Fruit fly).